Reading from the N-terminus, the 361-residue chain is 3-dehydroquinate synthase (361 aa).

Belongs to the archaeal-type DHQ synthase family.

The enzyme catalyses 2-amino-2,3,7-trideoxy-D-lyxo-hept-6-ulosonate + NAD(+) + H2O = 3-dehydroquinate + NH4(+) + NADH + H(+). Catalyzes the oxidative deamination and cyclization of 2-amino-3,7-dideoxy-D-threo-hept-6-ulosonic acid (ADH) to yield 3-dehydroquinate (DHQ), which is fed into the canonical shikimic pathway of aromatic amino acid biosynthesis. This chain is 3-dehydroquinate synthase, found in Methanococcus maripaludis (strain C5 / ATCC BAA-1333).